The following is a 61-amino-acid chain: Small ribosomal subunit protein uS14 (61 aa).

Positions 24, 27, 40, and 43 each coordinate Zn(2+).

This sequence belongs to the universal ribosomal protein uS14 family. Zinc-binding uS14 subfamily. As to quaternary structure, part of the 30S ribosomal subunit. Contacts proteins S3 and S10. Zn(2+) is required as a cofactor.

Binds 16S rRNA, required for the assembly of 30S particles and may also be responsible for determining the conformation of the 16S rRNA at the A site. This Bifidobacterium longum (strain DJO10A) protein is Small ribosomal subunit protein uS14.